Here is a 322-residue protein sequence, read N- to C-terminus: 2-methylene-furan-3-one reductase (322 aa).

NADP(+) is bound by residues lysine 59, 174-175 (GV), 197-200 (STKK), tyrosine 215, isoleucine 253, 264-266 (FVL), and 311-312 (RA). Residue lysine 59 participates in substrate binding.

The protein belongs to the zinc-containing alcohol dehydrogenase family. Quinone oxidoreductase subfamily. In terms of assembly, monomer.

The catalysed reaction is 4-hydroxy-2,5-dimethyl-furan-3(2H)-one + NADP(+) = 4-hydroxy-5-methyl-2-methylenefuran-3(2H)-one + NADPH + H(+). Enone oxidoreductase involved in the biosynthesis of 4-hydroxy-2,5-dimethyl-3(2H)-furanone (HDMF or furaneol), the key flavor compound in strawberries. The polypeptide is 2-methylene-furan-3-one reductase (EO) (Fragaria vesca (Woodland strawberry)).